Reading from the N-terminus, the 1138-residue chain is Protein RECOGNITION OF PERONOSPORA PARASITICA 7 (1138 aa).

Positions 166-422 (EENVKKLVGY…CNYVLSLSFE (257 aa)) constitute an NB-ARC domain. 189–196 (GMGGLGKT) provides a ligand contact to ATP. LRR repeat units lie at residues 544–565 (QYPTTLHVEKDINNPKLRSLVV), 566–581 (VTLGSWNMAGSSFTRL), 582–606 (ELLRVLDLVQAKLKGGKLASCIGKL), 607–631 (IHLRYLSLEYAEVTHIPYSLGNLKL), 655–680 (MQELRYLALPSLIERKTKLELSNLVK), 681–705 (LETLENFSTKNSSLEDLRGMVRLRT), 707–726 (TIELIEETSLETLAASIGGL), 727–752 (KYLEKLEIDDLGSKMRTKEAGIVFDF), 754–774 (HLKRLRLELYMPRLSKEQHFP), 775–797 (SHLTTLYLQHCRLEEDPMPILEK), 798–825 (LLQLKELELGHKSFSGKKMVCSSCGFPQ), 847–871 (MPLLLTLNIFDCRKLKQLPDEHLPS), 873–893 (LTAISLKKCGLEDPIPTLERL), 894–918 (VHLKELSLSELCGRIMVCTGGGFPQ), 940–963 (MPRLHTLEIRRCLKLKKLPNGFPQ), 1028–1050 (LEKLLHLKNVSLFQSFSGKRMVC), 1055–1078 (FPQLQKLSIREIEWEEWIVEQGSM), 1079–1103 (PLLHTLYIGVCPNLKELPDGLRFIY), and 1115–1138 (KKRLSEGGEDYYKVQHIPSVEFDD).

The protein belongs to the disease resistance NB-LRR family.

Functionally, disease resistance protein required for incompatible interactions with avirulent strains of Hyaloperonospora arabidopsidis (downy mildew), isolate Hpa-Hiks1 in cv. Columbia. The protein is Protein RECOGNITION OF PERONOSPORA PARASITICA 7 of Arabidopsis thaliana (Mouse-ear cress).